The chain runs to 150 residues: Large ribosomal subunit protein bL9 (150 aa).

It belongs to the bacterial ribosomal protein bL9 family.

Binds to the 23S rRNA. The protein is Large ribosomal subunit protein bL9 of Limosilactobacillus fermentum (strain NBRC 3956 / LMG 18251) (Lactobacillus fermentum).